We begin with the raw amino-acid sequence, 601 residues long: Elongation factor 4 (601 aa).

In terms of domain architecture, tr-type G spans 7-189 (KHTRNFSIVA…AIVEKVPVPD (183 aa)). GTP-binding positions include 19–24 (DHGKST) and 136–139 (NKID).

Belongs to the TRAFAC class translation factor GTPase superfamily. Classic translation factor GTPase family. LepA subfamily.

The protein resides in the cell membrane. The catalysed reaction is GTP + H2O = GDP + phosphate + H(+). In terms of biological role, required for accurate and efficient protein synthesis under certain stress conditions. May act as a fidelity factor of the translation reaction, by catalyzing a one-codon backward translocation of tRNAs on improperly translocated ribosomes. Back-translocation proceeds from a post-translocation (POST) complex to a pre-translocation (PRE) complex, thus giving elongation factor G a second chance to translocate the tRNAs correctly. Binds to ribosomes in a GTP-dependent manner. This chain is Elongation factor 4, found in Clostridium novyi (strain NT).